The sequence spans 419 residues: DNA primase DnaG (419 aa).

Residues D174–V260 enclose the Toprim domain. Mg(2+) contacts are provided by E180, D222, and D224. The tract at residues H277–E314 is disordered. Over residues S288–H305 the composition is skewed to basic residues.

It belongs to the archaeal DnaG primase family. In terms of assembly, forms a ternary complex with MCM helicase and DNA. Component of the archaeal exosome complex. It depends on Mg(2+) as a cofactor.

It carries out the reaction ssDNA + n NTP = ssDNA/pppN(pN)n-1 hybrid + (n-1) diphosphate.. Its function is as follows. RNA polymerase that catalyzes the synthesis of short RNA molecules used as primers for DNA polymerase during DNA replication. Also part of the exosome, which is a complex involved in RNA degradation. Acts as a poly(A)-binding protein that enhances the interaction between heteromeric, adenine-rich transcripts and the exosome. This chain is DNA primase DnaG, found in Methanobrevibacter smithii (strain ATCC 35061 / DSM 861 / OCM 144 / PS).